A 653-amino-acid polypeptide reads, in one-letter code: UvrABC system protein B (653 aa).

The region spanning 25-182 (EGIERGVREQ…EKLVELQYKS (158 aa)) is the Helicase ATP-binding domain. 38 to 45 (GVTGSGKT) is an ATP binding site. Positions 91-114 (YYDYYQPEAYIPHSDVYIEKDALI) match the Beta-hairpin motif. A Helicase C-terminal domain is found at 429–591 (QIADVVNESQ…ITPKSISKSV (163 aa)). The UVR domain maps to 616–651 (EEDIIKLQKEMLLHAENLEFEKALEIRNQINKLSQH).

This sequence belongs to the UvrB family. As to quaternary structure, forms a heterotetramer with UvrA during the search for lesions. Interacts with UvrC in an incision complex.

Its subcellular location is the cytoplasm. Its function is as follows. The UvrABC repair system catalyzes the recognition and processing of DNA lesions. A damage recognition complex composed of 2 UvrA and 2 UvrB subunits scans DNA for abnormalities. Upon binding of the UvrA(2)B(2) complex to a putative damaged site, the DNA wraps around one UvrB monomer. DNA wrap is dependent on ATP binding by UvrB and probably causes local melting of the DNA helix, facilitating insertion of UvrB beta-hairpin between the DNA strands. Then UvrB probes one DNA strand for the presence of a lesion. If a lesion is found the UvrA subunits dissociate and the UvrB-DNA preincision complex is formed. This complex is subsequently bound by UvrC and the second UvrB is released. If no lesion is found, the DNA wraps around the other UvrB subunit that will check the other stand for damage. The sequence is that of UvrABC system protein B from Anaplasma phagocytophilum (strain HZ).